The primary structure comprises 273 residues: Elongation factor Ts (273 aa).

The interval T80 to V83 is involved in Mg(2+) ion dislocation from EF-Tu.

This sequence belongs to the EF-Ts family.

The protein localises to the cytoplasm. Its function is as follows. Associates with the EF-Tu.GDP complex and induces the exchange of GDP to GTP. It remains bound to the aminoacyl-tRNA.EF-Tu.GTP complex up to the GTP hydrolysis stage on the ribosome. The protein is Elongation factor Ts of Tropheryma whipplei (strain Twist) (Whipple's bacillus).